The sequence spans 351 residues: Anthranilate phosphoribosyltransferase (351 aa).

5-phospho-alpha-D-ribose 1-diphosphate contacts are provided by residues G90, 93–94 (GD), T98, 100–103 (NIST), 118–126 (KHGNRSASG), and S130. G90 provides a ligand contact to anthranilate. S102 contacts Mg(2+). N121 is a binding site for anthranilate. Residue R176 coordinates anthranilate. Mg(2+)-binding residues include D235 and E236.

The protein belongs to the anthranilate phosphoribosyltransferase family. Homodimer. It depends on Mg(2+) as a cofactor.

The enzyme catalyses N-(5-phospho-beta-D-ribosyl)anthranilate + diphosphate = 5-phospho-alpha-D-ribose 1-diphosphate + anthranilate. It participates in amino-acid biosynthesis; L-tryptophan biosynthesis; L-tryptophan from chorismate: step 2/5. Functionally, catalyzes the transfer of the phosphoribosyl group of 5-phosphorylribose-1-pyrophosphate (PRPP) to anthranilate to yield N-(5'-phosphoribosyl)-anthranilate (PRA). This Prochlorococcus marinus (strain MIT 9313) protein is Anthranilate phosphoribosyltransferase.